The following is a 199-amino-acid chain: GTP-binding protein Di-Ras2 (199 aa).

GTP is bound by residues 14–21 (GAGGVGKS), 33–39 (RESYIPT), 61–65 (DTTGS), and 121–124 (NKCD). Residue serine 35 is modified to Phosphoserine. Residues 36–44 (YIPTVEDTY) carry the Effector region motif. Position 126 is a phosphoserine (serine 126). 152–153 (AK) is a binding site for GTP. Cysteine 196 is modified (cysteine methyl ester). A lipid anchor (S-geranylgeranyl cysteine) is attached at cysteine 196. The propeptide at 197–199 (VIM) is removed in mature form.

It belongs to the small GTPase superfamily. Di-Ras family. Ubiquitinated by the ECS(ASB11) complex via 'Lys-11'-linked ubiquitin chains, leading to its degradation by the proteasome.

The protein localises to the cell membrane. The catalysed reaction is GTP + H2O = GDP + phosphate + H(+). Its function is as follows. Displays low GTPase activity and exists predominantly in the GTP-bound form. This chain is GTP-binding protein Di-Ras2 (DIRAS2), found in Pongo abelii (Sumatran orangutan).